The chain runs to 209 residues: V-type ATP synthase subunit D (209 aa).

The protein belongs to the V-ATPase D subunit family.

Produces ATP from ADP in the presence of a proton gradient across the membrane. The chain is V-type ATP synthase subunit D (atpD) from Chlamydia pneumoniae (Chlamydophila pneumoniae).